Here is a 213-residue protein sequence, read N- to C-terminus: uncharacterized protein (213 aa).

This is an uncharacterized protein from Aquifex aeolicus (strain VF5).